A 374-amino-acid polypeptide reads, in one-letter code: Retron Eco8 reverse transcriptase (374 aa).

The 228-residue stretch at 25 to 252 folds into the Reverse transcriptase domain; the sequence is ENIITQSAIP…KEISINGYVI (228 aa). Mg(2+) is bound by residues D107, D200, and D201.

It belongs to the bacterial reverse transcriptase family.

The catalysed reaction is DNA(n) + a 2'-deoxyribonucleoside 5'-triphosphate = DNA(n+1) + diphosphate. Functionally, reverse transcriptase (RT) component of antiviral defense system retron Eco8, composed of this RT, the following endonuclease and a non-coding RNA (ncRNA) encoded between them. Expression of retron Eco8 confers protection against bacteriophages T4, T6, T7 and SECphi4, SECphi6 and SECphi18. At multiplicity of infection (MOI) of 0.02 cultures slow growth when infected with SECphi4 but do not collapse, at MOI 2 cultures collapse. Responsible for synthesis of msDNA (a branched molecule with RNA linked by a 2',5'-phosphodiester bond to ssDNA). The retron transcript serves as primer (from a conserved internal G residue) and template for the reaction, and codes for the RT. The sequence is that of Retron Eco8 reverse transcriptase from Escherichia coli.